Reading from the N-terminus, the 322-residue chain is Gluconeogenesis factor (322 aa).

NAD(+) contacts are provided by residues Thr13, 217–219 (NVM), 263–267 (KYAKE), and 300–301 (RH).

Belongs to the gluconeogenesis factor family.

The protein localises to the cytoplasm. Required for morphogenesis under gluconeogenic growth conditions. The sequence is that of Gluconeogenesis factor from Halalkalibacterium halodurans (strain ATCC BAA-125 / DSM 18197 / FERM 7344 / JCM 9153 / C-125) (Bacillus halodurans).